Here is a 33-residue protein sequence, read N- to C-terminus: Brevinin-2HSa (33 aa).

Cys27 and Cys33 are oxidised to a cystine.

As to expression, expressed by the skin glands.

The protein resides in the secreted. In terms of biological role, has antibacterial activity against the Gram-positive bacterium S.aureus ATCC 25923 (MIC=18 uM) and the Gram-negative bacterium E.coli ATCC 25726 (MIC=36 uM). The protein is Brevinin-2HSa of Odorrana hosii (Hose's rock frog).